The chain runs to 121 residues: Basic phospholipase A2 VRV-PL-V (121 aa).

Intrachain disulfides connect Cys26–Cys115, Cys28–Cys44, Cys43–Cys95, Cys49–Cys121, Cys50–Cys88, Cys57–Cys81, and Cys75–Cys86. Ca(2+) is bound by residues Tyr27, Gly29, and Gly31. Residue His47 is part of the active site. Asp48 provides a ligand contact to Ca(2+). Asp89 is a catalytic residue.

The protein belongs to the phospholipase A2 family. Group II subfamily. D49 sub-subfamily. In terms of assembly, monomer. Requires Ca(2+) as cofactor. In terms of tissue distribution, expressed by the venom gland.

Its subcellular location is the secreted. It carries out the reaction a 1,2-diacyl-sn-glycero-3-phosphocholine + H2O = a 1-acyl-sn-glycero-3-phosphocholine + a fatty acid + H(+). Its function is as follows. Snake venom phospholipase A2 (PLA2) that has a low enzymatic activity. PLA2 catalyzes the calcium-dependent hydrolysis of the 2-acyl groups in 3-sn-phosphoglycerides. This is Basic phospholipase A2 VRV-PL-V from Daboia russelii (Russel's viper).